A 216-amino-acid chain; its full sequence is Large ribosomal subunit protein uL3 (216 aa).

Gln-157 is modified (N5-methylglutamine).

The protein belongs to the universal ribosomal protein uL3 family. In terms of assembly, part of the 50S ribosomal subunit. Forms a cluster with proteins L14 and L19. Post-translationally, methylated by PrmB.

In terms of biological role, one of the primary rRNA binding proteins, it binds directly near the 3'-end of the 23S rRNA, where it nucleates assembly of the 50S subunit. This chain is Large ribosomal subunit protein uL3, found in Xanthomonas axonopodis pv. citri (strain 306).